Here is a 342-residue protein sequence, read N- to C-terminus: uncharacterized protein (342 aa).

One can recognise a Nudix hydrolase domain in the interval 155–309; that stretch reads TYGIHINGYV…KPNCALVMVD (155 aa).

This is an uncharacterized protein from Saccharomyces cerevisiae (strain ATCC 204508 / S288c) (Baker's yeast).